A 378-amino-acid chain; its full sequence is Alcohol dehydrogenase 1 (378 aa).

C48 provides a ligand contact to Zn(2+). 49–53 contacts NAD(+); sequence HTDVL. Residues H69, C99, C102, C105, C113, and C177 each contribute to the Zn(2+) site. NAD(+) is bound by residues 202 to 207, D226, K231, 274 to 276, 297 to 299, and 321 to 323; these read GIGTVG, TGV, IGA, and TTF.

This sequence belongs to the zinc-containing alcohol dehydrogenase family. Class-IV subfamily. As to quaternary structure, homodimer. The cofactor is Zn(2+). Expressed in flowers and disk florets.

The protein operates within isoprenoid biosynthesis. This Tanacetum cinerariifolium (Dalmatian daisy) protein is Alcohol dehydrogenase 1.